We begin with the raw amino-acid sequence, 336 residues long: Anthranilate phosphoribosyltransferase (336 aa).

Residues Gly-81, 84-85 (GD), Ser-89, 91-94 (NIST), 109-117 (KHGNRGLSS), and Ala-121 each bind 5-phospho-alpha-D-ribose 1-diphosphate. Gly-81 lines the anthranilate pocket. Ser-93 is a Mg(2+) binding site. Asn-112 provides a ligand contact to anthranilate. Arg-167 contributes to the anthranilate binding site. Mg(2+) is bound by residues Asp-225 and Glu-226.

It belongs to the anthranilate phosphoribosyltransferase family. As to quaternary structure, homodimer. Mg(2+) serves as cofactor.

It catalyses the reaction N-(5-phospho-beta-D-ribosyl)anthranilate + diphosphate = 5-phospho-alpha-D-ribose 1-diphosphate + anthranilate. It participates in amino-acid biosynthesis; L-tryptophan biosynthesis; L-tryptophan from chorismate: step 2/5. In terms of biological role, catalyzes the transfer of the phosphoribosyl group of 5-phosphorylribose-1-pyrophosphate (PRPP) to anthranilate to yield N-(5'-phosphoribosyl)-anthranilate (PRA). The polypeptide is Anthranilate phosphoribosyltransferase (Mesorhizobium japonicum (strain LMG 29417 / CECT 9101 / MAFF 303099) (Mesorhizobium loti (strain MAFF 303099))).